The sequence spans 860 residues: Late endosome and vacuole interface protein 11 (860 aa).

The interval 19–45 (EIINNSDHSSSHSTSHEEEDEEEDDTE) is disordered. The span at 20–31 (IINNSDHSSSHS) shows a compositional bias: low complexity. The span at 35–45 (EEEDEEEDDTE) shows a compositional bias: acidic residues. A BED-type zinc finger spans residues 84–138 (KNIAKFWSHFLAIEKKLTKVKCKHCGEILTRSDASLTKTFRSHLKTKHNISANKN). Positions 105, 108, 126, and 131 each coordinate Zn(2+).

This sequence belongs to the VID22 family.

It is found in the nucleus. Its function is as follows. Involved in vacuolar processing and morphology. The chain is Late endosome and vacuole interface protein 11 (ENV11) from Saccharomyces cerevisiae (strain ATCC 204508 / S288c) (Baker's yeast).